A 247-amino-acid chain; its full sequence is PF03932 family protein CutC (247 aa).

The protein belongs to the CutC family.

Its subcellular location is the cytoplasm. This is PF03932 family protein CutC from Aliivibrio fischeri (strain MJ11) (Vibrio fischeri).